Here is a 341-residue protein sequence, read N- to C-terminus: Glycerol-3-phosphate dehydrogenase [NAD(P)+] (341 aa).

Residues Ser-14, Phe-15, Arg-35, and Lys-108 each coordinate NADPH. 2 residues coordinate sn-glycerol 3-phosphate: Lys-108 and Gly-136. Ala-140 serves as a coordination point for NADPH. Positions 191, 244, 254, 255, and 256 each coordinate sn-glycerol 3-phosphate. Residue Lys-191 is the Proton acceptor of the active site. NADPH is bound at residue Arg-255. NADPH is bound by residues Val-279 and Glu-281.

The protein belongs to the NAD-dependent glycerol-3-phosphate dehydrogenase family.

Its subcellular location is the cytoplasm. It carries out the reaction sn-glycerol 3-phosphate + NAD(+) = dihydroxyacetone phosphate + NADH + H(+). The catalysed reaction is sn-glycerol 3-phosphate + NADP(+) = dihydroxyacetone phosphate + NADPH + H(+). The protein operates within membrane lipid metabolism; glycerophospholipid metabolism. Functionally, catalyzes the reduction of the glycolytic intermediate dihydroxyacetone phosphate (DHAP) to sn-glycerol 3-phosphate (G3P), the key precursor for phospholipid synthesis. This chain is Glycerol-3-phosphate dehydrogenase [NAD(P)+], found in Pseudomonas putida (strain ATCC 47054 / DSM 6125 / CFBP 8728 / NCIMB 11950 / KT2440).